The primary structure comprises 98 residues: UPF0390 protein zgc136864 (98 aa).

Over residues 1 to 30 (MAQGKQKFKAQRPGGAKKHQNKPKGLKKGG) the composition is skewed to basic residues. Disordered stretches follow at residues 1 to 38 (MAQGKQKFKAQRPGGAKKHQNKPKGLKKGGRIIAPKKA) and 63 to 98 (TQKASTSLHKKLSVLKTPAQKSGTAGAPKPAAGPSK). The segment covering 83-98 (KSGTAGAPKPAAGPSK) has biased composition (low complexity).

Belongs to the UPF0390 family.

This is UPF0390 protein zgc136864 from Danio rerio (Zebrafish).